The primary structure comprises 640 residues: MPIITLPNGDQKSFDQPVSVMQVAQSIGPGLAKNTVAGRVNDRLVDACDLITEDATLQIITPKDPEGVEIIRHSCAHLVGHAVKQLFPDVQMVIGPVIEEGFYYDIFSPKPFTLDDMAAIEARMKQLIDQDYDVVKKMTPREQVIQEFTTRGETYKLRLIDDMPEETQMGLYYHQEYVDMCRGPHVPNTKFLKNFKLTKISGAYWRGDAKNEQLQRIYGTAWSDKKELAAYIKRIEEAEKRDHRKIGKALDLFHMQEEAPGMVFWHANGWTIYQALEQYMRKVQQDNGYQEVRTPQIVDFTLWEKSGHAANYAENMFTTHSESRNYAVKPMNCPCHVQVFNQGLKSYRDLPVRLAEFGSCHRNEPSGSLHGIMRVRGFTQDDGHIFCTKEQIGKEVADFIQLTLDVYKDFGFEDVQMKLSTRPEKRVGDDRLWDLAEKSLADALDAAGLEWELQPGEGAFYGPKIEFSLKDCLGRVWQCGTIQCDFNLPIRLDASFVTEDNERDQPVMLHRAILGSFERFIGILIEHYAGFMPPWLAPVQACVMNITDSQAEACQQVVAKLKENGLRAISDLRNEKIGFKIRERTLERIPYLLVLGDREVEEGTVNVRTRSGKNLGTMSIDAFVDLVKSAVAERGRYIVE.

Residues 1 to 61 (MPIITLPNGD…TEDATLQIIT (61 aa)) enclose the TGS domain. Residues 242-533 (DHRKIGKALD…LIEHYAGFMP (292 aa)) are catalytic. 3 residues coordinate Zn(2+): C333, H384, and H510.

The protein belongs to the class-II aminoacyl-tRNA synthetase family. As to quaternary structure, homodimer. Zn(2+) serves as cofactor.

It localises to the cytoplasm. It catalyses the reaction tRNA(Thr) + L-threonine + ATP = L-threonyl-tRNA(Thr) + AMP + diphosphate + H(+). In terms of biological role, catalyzes the attachment of threonine to tRNA(Thr) in a two-step reaction: L-threonine is first activated by ATP to form Thr-AMP and then transferred to the acceptor end of tRNA(Thr). Also edits incorrectly charged L-seryl-tRNA(Thr). The protein is Threonine--tRNA ligase of Acinetobacter baylyi (strain ATCC 33305 / BD413 / ADP1).